We begin with the raw amino-acid sequence, 575 residues long: Arginine--tRNA ligase (575 aa).

A 'HIGH' region motif is present at residues 136-146 (ANPTGPLHVGH).

The protein belongs to the class-I aminoacyl-tRNA synthetase family. Monomer.

The protein resides in the cytoplasm. The catalysed reaction is tRNA(Arg) + L-arginine + ATP = L-arginyl-tRNA(Arg) + AMP + diphosphate. The sequence is that of Arginine--tRNA ligase from Polynucleobacter necessarius subsp. necessarius (strain STIR1).